We begin with the raw amino-acid sequence, 481 residues long: Cysteine--tRNA ligase (481 aa).

C29 serves as a coordination point for Zn(2+). Residues 31–41 (PTVYDYSHLGH) carry the 'HIGH' region motif. C210, H235, and E239 together coordinate Zn(2+). The short motif at 272 to 276 (KMSKS) is the 'KMSKS' region element. Position 275 (K275) interacts with ATP.

It belongs to the class-I aminoacyl-tRNA synthetase family. Monomer. The cofactor is Zn(2+).

The protein localises to the cytoplasm. It catalyses the reaction tRNA(Cys) + L-cysteine + ATP = L-cysteinyl-tRNA(Cys) + AMP + diphosphate. This Anaeromyxobacter dehalogenans (strain 2CP-1 / ATCC BAA-258) protein is Cysteine--tRNA ligase.